A 379-amino-acid chain; its full sequence is Guanine nucleotide-binding protein G(s) subunit alpha (379 aa).

The interval 1–29 (MGCFGSAGAKGDAEENKKRKEANKNINKQ) is disordered. Residue Gly2 is the site of N-palmitoyl glycine attachment. Cys3 carries the S-palmitoyl cysteine lipid modification. Residues 39–379 (ATHRLLLLGA…RMHLRQYELL (341 aa)) enclose the G-alpha domain. A G1 motif region spans residues 42–55 (RLLLLGAGESGKST). Residues 47 to 54 (GAGESGKS), 183 to 189 (LRCRVLT), 208 to 212 (DVGGQ), 277 to 280 (NKQD), and Ala351 contribute to the GTP site. Mg(2+) is bound by residues Ser54 and Thr189. Residues 181 to 189 (DILRCRVLT) are G2 motif. Residues 204–213 (FHMFDVGGQR) form a G3 motif region. Residues 273-280 (ILFLNKQD) form a G4 motif region. The tract at residues 349–354 (TCAVDT) is G5 motif.

It belongs to the G-alpha family. G(s) subfamily. G proteins are composed of 3 units; alpha, beta and gamma. The alpha chain contains the guanine nucleotide binding site.

Functionally, guanine nucleotide-binding proteins (G proteins) are involved as modulators or transducers in various transmembrane signaling systems. The G(s) protein is involved in hormonal regulation of adenylate cyclase: it activates the cyclase in response to beta-adrenergic stimuli. The chain is Guanine nucleotide-binding protein G(s) subunit alpha from Homarus americanus (American lobster).